Here is a 966-residue protein sequence, read N- to C-terminus: Integrator complex subunit 7 (966 aa).

2 positions are modified to phosphoserine: S338 and S809. The tract at residues 941–966 (LQQQAQQPLQPQPLPQPQPRSAYTRF) is disordered.

It belongs to the Integrator subunit 7 family. As to quaternary structure, component of the Integrator complex, composed of core subunits INTS1, INTS2, INTS3, INTS4, INTS5, INTS6, INTS7, INTS8, INTS9/RC74, INTS10, INTS11/CPSF3L, INTS12, INTS13, INTS14 and INTS15. The core complex associates with protein phosphatase 2A subunits PPP2CA and PPP2R1A, to form the Integrator-PP2A (INTAC) complex. Interacts with NABP2.

It localises to the nucleus. The protein localises to the chromosome. Its subcellular location is the cytoplasm. Component of the integrator complex, a multiprotein complex that terminates RNA polymerase II (Pol II) transcription in the promoter-proximal region of genes. The integrator complex provides a quality checkpoint during transcription elongation by driving premature transcription termination of transcripts that are unfavorably configured for transcriptional elongation: the complex terminates transcription by (1) catalyzing dephosphorylation of the C-terminal domain (CTD) of Pol II subunit POLR2A/RPB1 and SUPT5H/SPT5, (2) degrading the exiting nascent RNA transcript via endonuclease activity and (3) promoting the release of Pol II from bound DNA. The integrator complex is also involved in terminating the synthesis of non-coding Pol II transcripts, such as enhancer RNAs (eRNAs), small nuclear RNAs (snRNAs), telomerase RNAs and long non-coding RNAs (lncRNAs). May be not involved in the recruitment of cytoplasmic dynein to the nuclear envelope by different components of the INT complex. Plays a role in DNA damage response (DDR) signaling during the S phase. This Mus musculus (Mouse) protein is Integrator complex subunit 7 (Ints7).